Reading from the N-terminus, the 221-residue chain is Transcription factor bHLH148 (221 aa).

2 disordered regions span residues Met1 to His45 and Leu70 to Val89. Low complexity-rich tracts occupy residues Ser26–Ser41 and Ser72–Ala82. Positions Lys148–Leu197 constitute a bHLH domain.

As to quaternary structure, homodimer. Interacts with PRE3. Binds to RSA1.

The protein localises to the nucleus. Its function is as follows. bHLH transcription factor that binds DNA on specific sequence 5'-CANNTG-3' in target gene promoters. Negatively regulates brassinosteroid signaling. Together with BHLH148/RITF1, regulates the transcription of several genes involved in the detoxification of reactive oxygen species (ROS) generated by salt (NaCl) stress. Confers tolerance to salt and to the oxidative stress-inducing reagents hydrogen peroxide H(2)O(2) and methyl viologen (MV). The chain is Transcription factor bHLH148 from Arabidopsis thaliana (Mouse-ear cress).